Reading from the N-terminus, the 354-residue chain is uncharacterized protein (354 aa).

This sequence belongs to the asfivirus B354L family.

This is an uncharacterized protein from Ornithodoros (relapsing fever ticks).